Reading from the N-terminus, the 577-residue chain is MFS-type transporter pgmG (577 aa).

The segment at M1–Q32 is disordered. Positions G21–E31 are enriched in basic and acidic residues. The next 8 helical transmembrane spans lie at F45 to V65, W84 to Y104, W111 to P131, A141 to N161, T174 to V194, P218 to L238, L259 to G279, and C292 to G312. N-linked (GlcNAc...) asparagine glycosylation is present at N317. Residues F330 to F350 form a helical membrane-spanning segment. N360 carries N-linked (GlcNAc...) asparagine glycosylation. A run of 5 helical transmembrane segments spans residues A363–L383, M395–I415, G426–A446, V457–A477, and I532–F552.

It belongs to the major facilitator superfamily. TCR/Tet family.

Its subcellular location is the membrane. MFS-type transporter; part of the gene cluster that mediates the biosynthesis of pleosporalin A, ascomycone A, as well as a third cryptic naphthoquinone derived pigment, all responsible for the coloration of conidia. Seems not to be involved in pigment biosynthesis although its expression is regulated by the cluster-specific transcription factor pgmR. This Aspergillus terreus (strain NIH 2624 / FGSC A1156) protein is MFS-type transporter pgmG.